The primary structure comprises 519 residues: Signal transduction histidine-protein kinase/phosphatase MprB (519 aa).

Residues 1–26 (MVRFAWRRRASLRATSSLSLRWRVML) lie on the Cytoplasmic side of the membrane. Residues 27-47 (LAMSMVAMVVVLMAFAVYVVI) form a helical membrane-spanning segment. The Extracellular segment spans residues 48–163 (SAALYSDIDN…PTEAVMTKLR (116 aa)). The chain crosses the membrane as a helical span at residues 164 to 184 (WVLLIVGSLGVAVAAVAGGMV). Residues 185–519 (TRAGLRPVGR…SVDYQSARAR (335 aa)) are Cytoplasmic-facing. An HAMP domain is found at 186-238 (RAGLRPVGRLTEAAERVARTDDLRPIPVFGSDELARLTEAFNLMLRALAESRE). Residues 246-466 (DAGHELRTPL…SIYVLLPGRP (221 aa)) form the Histidine kinase domain. Position 249 is a phosphohistidine; by autocatalysis (H249).

Mg(2+) serves as cofactor. Requires Mn(2+) as cofactor. Autophosphorylated.

It localises to the cell membrane. It catalyses the reaction ATP + protein L-histidine = ADP + protein N-phospho-L-histidine.. In terms of biological role, member of the two-component regulatory system MprB/MprA which contributes to maintaining a balance among several systems involved in stress resistance and is required for establishment and maintenance of persistent infection in the host. In response to environmental signals MprB acts both as a membrane-associated protein kinase that undergoes autophosphorylation and subsequently transfers the phosphate to MprA, and a protein phosphatase that dephosphorylates phospho-MprA. This is Signal transduction histidine-protein kinase/phosphatase MprB (mprB) from Mycobacterium leprae (strain TN).